A 62-amino-acid polypeptide reads, in one-letter code: Cecropin-A (62 aa).

Residues 1-20 form the signal peptide; sequence MNLVKILFCVFACLVFTVTA. The propeptide at 21-24 is removed by a dipeptidylpeptidase; sequence VPEP. A Threonine amide modification is found at threonine 60.

The protein belongs to the cecropin family.

It is found in the secreted. In terms of biological role, has antibacterial activity. The protein is Cecropin-A of Trichoplusia ni (Cabbage looper).